The chain runs to 207 residues: Glycerol-3-phosphate acyltransferase (207 aa).

6 helical membrane-spanning segments follow: residues 7–27, 58–78, 83–103, 116–136, 141–161, and 166–186; these read YALA…LVIV, LATF…FTLL, VGFV…WLGF, LAFV…LGLF, ISSL…WLMG, and LILA…RENI.

This sequence belongs to the PlsY family. As to quaternary structure, probably interacts with PlsX.

It is found in the cell inner membrane. It carries out the reaction an acyl phosphate + sn-glycerol 3-phosphate = a 1-acyl-sn-glycero-3-phosphate + phosphate. It participates in lipid metabolism; phospholipid metabolism. Catalyzes the transfer of an acyl group from acyl-phosphate (acyl-PO(4)) to glycerol-3-phosphate (G3P) to form lysophosphatidic acid (LPA). This enzyme utilizes acyl-phosphate as fatty acyl donor, but not acyl-CoA or acyl-ACP. This Hyphomonas neptunium (strain ATCC 15444) protein is Glycerol-3-phosphate acyltransferase.